Reading from the N-terminus, the 712-residue chain is Zinc finger and BTB domain-containing protein 39 (712 aa).

Positions 30 to 96 constitute a BTB domain; the sequence is CDVTIVVGSR…VYTSELFTDL (67 aa). Disordered stretches follow at residues 129-162, 176-224, and 236-260; these read ARAKPLTSTSESHSGTLSCPSAEPAHPLGELRGG, SDAG…IPSM, and GIQTSTSSCQPYKVQSNGDFSKNSF. Residues 134 to 147 are compositionally biased toward polar residues; sequence LTSTSESHSGTLSC. Residue lysine 183 forms a Glycyl lysine isopeptide (Lys-Gly) (interchain with G-Cter in SUMO2) linkage. The C2H2-type 1 zinc finger occupies 372–394; that stretch reads GNCKVCETHFQDRNSRVTHVLSH. The segment at 400–422 adopts a C2H2-type 2; atypical zinc-finger fold; sequence FSCDMCETKFFTQWQLTLHRRDG. Lysine 439 is covalently cross-linked (Glycyl lysine isopeptide (Lys-Gly) (interchain with G-Cter in SUMO2)). The C2H2-type 3; atypical zinc finger occupies 480–502; that stretch reads QACSVCDQRHLNLCSLMWHTLSH. C2H2-type zinc fingers lie at residues 508–530, 538–560, 605–627, and 633–655; these read FSCSVCANSFVDWHLLEKHMAVH, FHCRLCSQSFKSEAAYRYHVSQH, YSCKVCGKRFAHTSEFNYHRRIH, and YQCKVCHKFFRGRSTIKCHLKTH. Residues 661 to 683 form a C2H2-type 8; atypical zinc finger; it reads YRCTVCGHYSSTLNLMSKHVGVH.

It belongs to the krueppel C2H2-type zinc-finger protein family.

The protein localises to the nucleus. In terms of biological role, may be involved in transcriptional regulation. The protein is Zinc finger and BTB domain-containing protein 39 (ZBTB39) of Homo sapiens (Human).